We begin with the raw amino-acid sequence, 707 residues long: Lipase maturation factor 2 (707 aa).

A run of 10 helical transmembrane segments spans residues 10–30 (AFLWGLSGIYLFAFVSLYVQI), 78–98 (MELICLLGALLSLGALLFSCL), 102–122 (LVFLLLWVFYLSLYQVGQVFL), 126–146 (WDSLLLETGFLAILVAPLHAM), 158–178 (GVTFWLTRWLLFRLMFASGVV), 220–240 (FSVVATFFIEIGVPWLFFLPF), 256–276 (ILIIITGNYNFFNLLTIVLCC), 309–329 (LVSLLEIPIFGLLVFWTVKYF), 358–378 (ITFPSIWIAAASLGWEILKGM), and 395–415 (LQWLMFSCAAAAMFTISLVPY). The N-linked (GlcNAc...) asparagine glycan is linked to asparagine 483. A helical transmembrane segment spans residues 634-654 (LLLHSFIFGIFTIYFLQAMFG). The interval 661-707 (VAKQRHSMPPNEKKKQKPNSGQGESASSKSSGHGTDTVRRNKKNEKS) is disordered. A compositionally biased stretch (low complexity) spans 680-694 (SGQGESASSKSSGHG). Residues 696-707 (DTVRRNKKNEKS) show a composition bias toward basic and acidic residues.

This sequence belongs to the lipase maturation factor family.

The protein localises to the endoplasmic reticulum membrane. Functionally, involved in the maturation of specific proteins in the endoplasmic reticulum. This chain is Lipase maturation factor 2 (lmf2), found in Xenopus laevis (African clawed frog).